Here is a 611-residue protein sequence, read N- to C-terminus: MTAEKAEGATGFAGFDPKSVEPYIVKDPESLAINMARAAEQLGKAASAWLAPREAGEKTDSFAEPVSDMVKTLSKVSEYWLSDPRRTLEAQTHLLGSFFDMWSRTLQRMAGDAVEDPANLQRNDKRFADEDWVKNPFFDFIRQAYFVTSDWAERMVRDAEGLDDHTRHKAAFYVRQIASALSPTNFITTNPQLYRETVASSGANLVKGMQMLAEDIAAGRGELRLRQTDTSKFAIGENIAITPGKVIAQNDVCQVLQYEASTETVLKRPLLICPPWINKFYVLDLNPEKSFIKWAVDQGQTVFVISWVNPDERHASKDWEAYAREGIGFALDIIEQATGEREVNSIGYCVGGTLLAATLALHAAEGDERIRSATLFTTQVDFTHAGDLKVFVDDDQIRHLEANMSATGYLEGSKMASAFNMLRASELIWPYFVNNYLKGQDPLPFDLLYWNSDSTRMPAANHSFYLRNCYLENRLSKGEMVLAGRRVSLGDVKIPIYNLATKEDHIAPAKSVFLGSSSFGGKVTFVLSGSGHIAGVVNPPARSKYQYWTGGAPKGDIETWMGKAKETAGSWWPHWQGWVERLDKRRVPARKAGGPLNSIEEAPGSYVRVRA.

C349 is an active-site residue.

The protein belongs to the PHA/PHB synthase family. Type I PhaC subfamily. As to quaternary structure, monomer.

It is found in the cytoplasm. It catalyses the reaction (3R)-3-hydroxybutanoyl-CoA + [(3R)-hydroxybutanoate](n) = [(3R)-hydroxybutanoate](n+1) + CoA. The protein operates within biopolymer metabolism; poly-(R)-3-hydroxybutanoate biosynthesis. Functionally, polymerizes D(-)-3-hydroxybutyryl-CoA to create PHB which consists of thousands of hydroxybutyrate molecules linked end to end. PHB serves as an intracellular energy reserve material when cells grow under conditions of nutrient limitation. The polypeptide is Poly(3-hydroxyalkanoate) polymerase subunit PhaC (Rhizobium meliloti (strain 1021) (Ensifer meliloti)).